The primary structure comprises 1104 residues: General transcription factor II-I repeat domain-containing protein 1 (1104 aa).

Glycyl lysine isopeptide (Lys-Gly) (interchain with G-Cter in SUMO2) cross-links involve residues Lys-27, Lys-184, Lys-212, Lys-225, Lys-238, Lys-271, Lys-337, Lys-436, Lys-439, and Lys-443. The stretch at 119–213 is one GTF2I-like 1 repeat; sequence LEQCSDVYLL…PDDGGQDTKA (95 aa). A GTF2I-like 2 repeat occupies 342–436; sequence IKEMEDINTL…FDERIFTGNK (95 aa). At Ser-448 the chain carries Phosphoserine. A disordered region spans residues 509–559; that stretch reads SDPSPTSEEMTDSLPGHLPSEDSGYGMEMPADKGPSEEPWSEERPAEESPG. A compositionally biased stretch (basic and acidic residues) spans 538–555; the sequence is PADKGPSEEPWSEERPAE. Residues 556 to 650 form a GTF2I-like 3 repeat; it reads ESPGDVIRPL…ELLTDGVKEP (95 aa). Residues Lys-567, Lys-579, Lys-588, Lys-622, Lys-638, Lys-669, Lys-709, Lys-717, Lys-757, Lys-759, and Lys-772 each participate in a glycyl lysine isopeptide (Lys-Gly) (interchain with G-Cter in SUMO2) cross-link. A GTF2I-like 4 repeat occupies 681 to 775; the sequence is LSRIDIANTL…FQGLIPKPET (95 aa). The tract at residues 783–802 is disordered; the sequence is EAGKTTRPRRLQQDTWQPDE. The stretch at 805-899 is one GTF2I-like 5 repeat; sequence ANRLGEKVIL…LQPFAEVCND (95 aa). Residues Lys-841 and Lys-901 each participate in a glycyl lysine isopeptide (Lys-Gly) (interchain with G-Cter in SUMO2) cross-link. Residues 908–1002 form a GTF2I-like 6 repeat; sequence SNKLGKKVIL…LQPFGDVCNN (95 aa). Disordered stretches follow at residues 1001-1044 and 1058-1104; these read NNAK…VAST and LHPN…LPTR. The Nuclear localization signal motif lies at 1012 to 1019; sequence PKRKRKRV. Over residues 1021-1043 the composition is skewed to low complexity; the sequence is EGNSVSSSSSSSSSSSNPESVAS.

Belongs to the TFII-I family. As to quaternary structure, interacts with the retinoblastoma protein (RB1) via its C-terminus. Widely expressed.

The protein localises to the nucleus. May be a transcription regulator involved in cell-cycle progression and skeletal muscle differentiation. May repress GTF2I transcriptional functions, by preventing its nuclear residency, or by inhibiting its transcriptional activation. May contribute to slow-twitch fiber type specificity during myogenesis and in regenerating muscles. Binds troponin I slow-muscle fiber enhancer (USE B1). Binds specifically and with high affinity to the EFG sequences derived from the early enhancer of HOXC8. In Mus musculus (Mouse), this protein is General transcription factor II-I repeat domain-containing protein 1 (Gtf2ird1).